The following is a 232-amino-acid chain: MHLMIPAEYISNVIYEGPRADSLYAADQRLRQLADSVRTTAESLNTTLDELHENWKGSSSEWMADAALRYLDWLSKHSRQILRTARVIESLVMAYEETLLRVVPPATIANNREEVRRLIASNVAGGKHSSNRRPRGTIRAVPGRKYPSNGPLSKLDPICAIEAAPMAGAAADPQERVGPRGRRGLAGQQQCRGRPGPSLRCSHDTPRFQMNQAFHTMVNMLLTCFACQEKPR.

Disordered regions lie at residues 123-147 (VAGG…RKYP) and 169-200 (AAAD…PSLR).

This sequence belongs to the mycobacterial PPE family.

This is an uncharacterized protein from Mycobacterium tuberculosis (strain ATCC 25618 / H37Rv).